A 226-amino-acid chain; its full sequence is tRNA (guanine-N(1)-)-methyltransferase (226 aa).

S-adenosyl-L-methionine-binding positions include glycine 112 and isoleucine 132–leucine 137.

Belongs to the RNA methyltransferase TrmD family. Homodimer.

The protein localises to the cytoplasm. The enzyme catalyses guanosine(37) in tRNA + S-adenosyl-L-methionine = N(1)-methylguanosine(37) in tRNA + S-adenosyl-L-homocysteine + H(+). In terms of biological role, specifically methylates guanosine-37 in various tRNAs. The chain is tRNA (guanine-N(1)-)-methyltransferase from Flavobacterium johnsoniae (strain ATCC 17061 / DSM 2064 / JCM 8514 / BCRC 14874 / CCUG 350202 / NBRC 14942 / NCIMB 11054 / UW101) (Cytophaga johnsonae).